We begin with the raw amino-acid sequence, 227 residues long: Ribonuclease 3 (227 aa).

The 123-residue stretch at 4 to 126 (LDRLERKIGY…IIGAMSLDQG (123 aa)) folds into the RNase III domain. A Mg(2+)-binding site is contributed by glutamate 39. Aspartate 43 is a catalytic residue. The Mg(2+) site is built by aspartate 112 and glutamate 115. The active site involves glutamate 115. In terms of domain architecture, DRBM spans 153-226 (DAKTRLQEYL…AEQILKELDI (74 aa)).

This sequence belongs to the ribonuclease III family. In terms of assembly, homodimer. The cofactor is Mg(2+).

The protein localises to the cytoplasm. The enzyme catalyses Endonucleolytic cleavage to 5'-phosphomonoester.. Its function is as follows. Digests double-stranded RNA. Involved in the processing of primary rRNA transcript to yield the immediate precursors to the large and small rRNAs (23S and 16S). Processes some mRNAs, and tRNAs when they are encoded in the rRNA operon. Processes pre-crRNA and tracrRNA of type II CRISPR loci if present in the organism. This is Ribonuclease 3 from Haemophilus influenzae (strain 86-028NP).